Reading from the N-terminus, the 354-residue chain is NADPH dehydrogenase (354 aa).

FMN is bound by residues serine 23, proline 24, cysteine 26, alanine 58, and glutamine 100. Catalysis depends on tyrosine 182, which acts as the Proton donor. The FMN site is built by arginine 230, leucine 301, glycine 323, and arginine 324.

This sequence belongs to the NADH:flavin oxidoreductase/NADH oxidase family. NamA subfamily. Homodimer. Behaves as an active monomer in solution while in the crystal packing assembles following the classical dimeric architecture of other thermophilic-like ene-reductases. Requires FMN as cofactor.

It carries out the reaction A + NADPH + H(+) = AH2 + NADP(+). In terms of biological role, ene-reductase that catalyzes the stereoselective reduction of activated C-C double bonds. Shows very good activity with 4-ketoisophorone, 2-cyclohexen-1-one and 1-octen-3-one, and low activity with maleimide, 2-methyl-pentenal, 2-methyl-cyclohexen-1-one, 2-cyclopenten-1-one and trans-2-hexen-1-al. Shows the highest catalytic efficiency with ketoisophorone. Exhibits a restricted substrate spectrum with generally lower activities compared to other ene-reductases. The sequence is that of NADPH dehydrogenase from Chloroflexus aggregans (strain MD-66 / DSM 9485).